The following is a 140-amino-acid chain: Large ribosomal subunit protein uL14 (140 aa).

It belongs to the universal ribosomal protein uL14 family.

The protein is Large ribosomal subunit protein uL14 (RpL23) of Drosophila melanogaster (Fruit fly).